Here is a 741-residue protein sequence, read N- to C-terminus: Pentatricopeptide repeat-containing protein At1g08070, chloroplastic (741 aa).

13 PPR repeats span residues 98 to 132, 133 to 167, 168 to 202, 203 to 229, 230 to 264, 265 to 299, 300 to 330, 331 to 365, 366 to 396, 403 to 433, 434 to 468, 469 to 499, and 505 to 535; these read NLLI…GLLP, NSYT…GCDL, DLYV…DVVS, YTAL…IPVK, DVVS…NVRP, DEST…GFGS, NLKI…LPYK, DVIS…GETP, NDVT…IDKR, ASSL…ILHK, SLSS…GIQP, DDIT…MTQD, and KLEH…MEME. The tract at residues 540–615 is type E motif; it reads IWCSLLKACK…VPGCSSIEID (76 aa). The segment at 616-646 is type E(+) motif; it reads SVVHEFIIGDKFHPRNREIYGMLEEMEVLLE. Positions 647–741 are type DYW motif; the sequence is KAGFVPDTSE…DGVCSCNDYW (95 aa).

It belongs to the PPR family. PCMP-H subfamily. As to quaternary structure, interacts with ORRM1. Interacts with VAR3/OZ1.

The protein resides in the plastid. It localises to the chloroplast. In terms of biological role, involved in multiple sites RNA editing events in chloroplasts. Involved in the editing of the site 9 of ndhB (ndhB-9) and site 1 of ndhG (ndhG-1) transcripts, which are two plastid-encoded subunits of the chloroplast NAD(P)H dehydrogenase (NDH) complex. Not essential for the activity of the NDH complex of the photosynthetic electron transport chain. This is Pentatricopeptide repeat-containing protein At1g08070, chloroplastic (PCMP-H12) from Arabidopsis thaliana (Mouse-ear cress).